An 82-amino-acid chain; its full sequence is Antimicrobial peptide Smp43 (82 aa).

Residues Met1–Ala22 form the signal peptide. Residues Glu66–Ser82 constitute a propeptide that is removed on maturation.

The protein belongs to the non-disulfide-bridged peptide (NDBP) superfamily. Long chain multifunctional peptide (group 2) family. In terms of tissue distribution, expressed by the venom gland.

It localises to the secreted. It is found in the target cell membrane. Functionally, antimicrobial peptide with moderate activity against Gram-positive bacteria and Gram-negative bacteria, as well as low activity against fungi. Acts by inducing bacterial membrane disruption. Shows activity against B.subtilis (MIC=4 ug/ml), S.epidermidis (MIC=64 ug/ml), S.aureus (MIC=32 ug/ml), E.coli (MIC=128 ug/ml), K.pneumoniae (MIC=64 ug/ml), P.aeruginosa (MIC=64 ug/ml), and C.albicans (MIC=128 ug/ml). Does not show hemolysis activity. The sequence is that of Antimicrobial peptide Smp43 from Scorpio palmatus (Israeli golden scorpion).